Consider the following 467-residue polypeptide: Ribulose bisphosphate carboxylase large chain (467 aa).

An N6,N6,N6-trimethyllysine modification is found at Lys-5. Substrate is bound by residues Asn-114 and Thr-164. The active-site Proton acceptor is the Lys-166. Lys-168 provides a ligand contact to substrate. Positions 192, 194, and 195 each coordinate Mg(2+). Lys-192 is subject to N6-carboxylysine. The active-site Proton acceptor is the His-285. The substrate site is built by Arg-286, His-318, and Ser-370.

The protein belongs to the RuBisCO large chain family. Type I subfamily. In terms of assembly, heterohexadecamer of 8 large chains and 8 small chains; disulfide-linked. The disulfide link is formed within the large subunit homodimers. Mg(2+) is required as a cofactor. The disulfide bond which can form in the large chain dimeric partners within the hexadecamer appears to be associated with oxidative stress and protein turnover.

The protein resides in the plastid. It is found in the chloroplast. The enzyme catalyses 2 (2R)-3-phosphoglycerate + 2 H(+) = D-ribulose 1,5-bisphosphate + CO2 + H2O. The catalysed reaction is D-ribulose 1,5-bisphosphate + O2 = 2-phosphoglycolate + (2R)-3-phosphoglycerate + 2 H(+). Functionally, ruBisCO catalyzes two reactions: the carboxylation of D-ribulose 1,5-bisphosphate, the primary event in carbon dioxide fixation, as well as the oxidative fragmentation of the pentose substrate in the photorespiration process. Both reactions occur simultaneously and in competition at the same active site. This is Ribulose bisphosphate carboxylase large chain from Tasmannia insipida (Pepperbush).